Reading from the N-terminus, the 284-residue chain is NAD kinase (284 aa).

Catalysis depends on Asp61, which acts as the Proton acceptor. Residues 61–62, Arg66, 136–137, Arg147, Lys164, Asp166, and Leu201 contribute to the NAD(+) site; these read DG and ND.

This sequence belongs to the NAD kinase family. The cofactor is a divalent metal cation.

The protein resides in the cytoplasm. It carries out the reaction NAD(+) + ATP = ADP + NADP(+) + H(+). Involved in the regulation of the intracellular balance of NAD and NADP, and is a key enzyme in the biosynthesis of NADP. Catalyzes specifically the phosphorylation on 2'-hydroxyl of the adenosine moiety of NAD to yield NADP. This Dehalococcoides mccartyi (strain ATCC BAA-2100 / JCM 16839 / KCTC 5957 / BAV1) protein is NAD kinase.